Here is a 571-residue protein sequence, read N- to C-terminus: Coiled-coil domain-containing protein 22 homolog (571 aa).

Coiled-coil stretches lie at residues 406–434 (MMDL…SRTA) and 509–571 (CAEL…AHLR).

Belongs to the CCDC22 family.

The polypeptide is Coiled-coil domain-containing protein 22 homolog (Culex quinquefasciatus (Southern house mosquito)).